Consider the following 220-residue polypeptide: Fructose-6-phosphate aldolase (220 aa).

The active-site Schiff-base intermediate with substrate is Lys-85.

The protein belongs to the transaldolase family. Type 3A subfamily. Homodecamer.

It is found in the cytoplasm. It catalyses the reaction beta-D-fructose 6-phosphate = dihydroxyacetone + D-glyceraldehyde 3-phosphate. Its function is as follows. Catalyzes the reversible formation of fructose 6-phosphate from dihydroxyacetone and D-glyceraldehyde 3-phosphate via an aldolization reaction. The protein is Fructose-6-phosphate aldolase of Salmonella heidelberg (strain SL476).